Here is a 122-residue protein sequence, read N- to C-terminus: Small ribosomal subunit protein uS13 (122 aa).

A disordered region spans residues 99-122; that stretch reads RGQRTHTNARTRKGPAKAIAGKKK.

It belongs to the universal ribosomal protein uS13 family. Part of the 30S ribosomal subunit. Forms a loose heterodimer with protein S19. Forms two bridges to the 50S subunit in the 70S ribosome.

In terms of biological role, located at the top of the head of the 30S subunit, it contacts several helices of the 16S rRNA. In the 70S ribosome it contacts the 23S rRNA (bridge B1a) and protein L5 of the 50S subunit (bridge B1b), connecting the 2 subunits; these bridges are implicated in subunit movement. Contacts the tRNAs in the A and P-sites. In Rhizobium etli (strain ATCC 51251 / DSM 11541 / JCM 21823 / NBRC 15573 / CFN 42), this protein is Small ribosomal subunit protein uS13.